The following is a 187-amino-acid chain: Elongation factor P (187 aa).

It belongs to the elongation factor P family.

It localises to the cytoplasm. The protein operates within protein biosynthesis; polypeptide chain elongation. Its function is as follows. Involved in peptide bond synthesis. Stimulates efficient translation and peptide-bond synthesis on native or reconstituted 70S ribosomes in vitro. Probably functions indirectly by altering the affinity of the ribosome for aminoacyl-tRNA, thus increasing their reactivity as acceptors for peptidyl transferase. The sequence is that of Elongation factor P from Synechococcus sp. (strain WH7803).